Reading from the N-terminus, the 656-residue chain is Methionine--tRNA ligase (656 aa).

A 'HIGH' region motif is present at residues 11-21; the sequence is YYVNDIPHIGH. Residues Cys-126, Cys-129, Cys-147, and Cys-150 each contribute to the Zn(2+) site. Residues 301 to 305 carry the 'KMSKS' region motif; that stretch reads KMSKS. An ATP-binding site is contributed by Lys-304. The 102-residue stretch at 555–656 folds into the tRNA-binding domain; it reads DFKKVEIKVG…REKIAGSLIS (102 aa).

It belongs to the class-I aminoacyl-tRNA synthetase family. MetG type 2A subfamily. In terms of assembly, homodimer. Requires Zn(2+) as cofactor.

It is found in the cytoplasm. The enzyme catalyses tRNA(Met) + L-methionine + ATP = L-methionyl-tRNA(Met) + AMP + diphosphate. In terms of biological role, is required not only for elongation of protein synthesis but also for the initiation of all mRNA translation through initiator tRNA(fMet) aminoacylation. In Helicobacter pylori (strain J99 / ATCC 700824) (Campylobacter pylori J99), this protein is Methionine--tRNA ligase (metG).